The chain runs to 194 residues: Oligoribonuclease (194 aa).

The Exonuclease domain occupies 11–174 (LIWIDLEMTG…SDVRDSIDEL (164 aa)). Tyrosine 132 is a catalytic residue.

This sequence belongs to the oligoribonuclease family.

Its subcellular location is the cytoplasm. 3'-to-5' exoribonuclease specific for small oligoribonucleotides. The protein is Oligoribonuclease of Xanthomonas euvesicatoria pv. vesicatoria (strain 85-10) (Xanthomonas campestris pv. vesicatoria).